The primary structure comprises 633 residues: MRRPKKYEAGEATQYISRRAALRKLQLSLNDFRRLCILKGVYPREPKHRRRAQKGSSDIKILYHAKDIRFLLHEPIVWTLRDYKIFAKKSGRDRAIKDFRNLKRRLAMFPEIKLDHIVKERYPTFIDALKDLDDCLTLLFLFSTFPSLHLIPREQSNLCRRLTIEFLHYVIASKSLRKVFISIKGYYFQAEIKGQKVTWIVPHYYPFKPQSRQEVDFKVMSIFVEFYTIMLGFTNFRLYHGLNLAYPPQFPSNMLQDNADTLKDESSFVSDRITALNFELLRTDKVQEDEEEPDIDMELLEQDGDSKRIIKMKQEAQEVSRLRTLFKGLKFFINREVPREPLVIIIRSFGGKVSWDSSVFSGATYDESDETITHQIVDRPSLSTQYISRDYIQPQWIFDCVNQRQLLPTNKYFLGEPLPPHLSPFVDAKRDTYIPPEEKALHDPSLIETHAQSEDESEDDAAAEEEDTVEQELLDAQLQRAYQQETAEYKKYGGADGVNEDEEDSDEEDFDGEEQESDDDDEEELDEKEKRLLEEKQKMSVQSGKVHKVNKRQVHKAEVDEHRLQARMVKPRHRNLFRKLIREKQAKEKEEWLLRKKRRTIETDAKEAKKLAKREARKAAAAAAAAAAQLGAK.

Positions 321–414 (RLRTLFKGLK…QLLPTNKYFL (94 aa)) constitute a BRCT domain. Disordered regions lie at residues 450–470 (HAQS…DTVE) and 490–567 (KKYG…LQAR). Residues S453 and S457 each carry the phosphoserine modification. 2 stretches are compositionally biased toward acidic residues: residues 454–470 (EDES…DTVE) and 498–526 (VNED…EELD). Residues 527-538 (EKEKRLLEEKQK) show a composition bias toward basic and acidic residues. Residues 545-554 (KVHKVNKRQV) show a composition bias toward basic residues. The segment covering 555-564 (HKAEVDEHRL) has biased composition (basic and acidic residues). The stretch at 593–626 (LLRKKRRTIETDAKEAKKLAKREARKAAAAAAAA) forms a coiled coil.

Belongs to the pescadillo family.

The protein localises to the nucleus. It is found in the nucleolus. The protein resides in the nucleoplasm. In terms of biological role, required for maturation of ribosomal RNAs and formation of the large ribosomal subunit. This chain is Pescadillo homolog, found in Drosophila virilis (Fruit fly).